We begin with the raw amino-acid sequence, 271 residues long: Serine protease SP24D (271 aa).

A signal peptide spans M1–G22. Positions V23 to R49 are cleaved as a propeptide — activation peptide. In terms of domain architecture, Peptidase S1 spans I50–R269. A disulfide bond links C75 and C91. Residues H90 and D136 each act as charge relay system in the active site. 2 disulfides stabilise this stretch: C199–C211 and C221–C246. Catalysis depends on S225, which acts as the Charge relay system.

It belongs to the peptidase S1 family. Highest level of adult expression is in the thorax.

The protein is Serine protease SP24D (Sp24D) of Anopheles gambiae (African malaria mosquito).